The chain runs to 644 residues: Biosynthetic arginine decarboxylase (644 aa).

Position 113 is an N6-(pyridoxal phosphate)lysine (Lys113). 293 to 303 (FDVGGGLGVDY) provides a ligand contact to substrate.

This sequence belongs to the Orn/Lys/Arg decarboxylase class-II family. SpeA subfamily. Requires Mg(2+) as cofactor. It depends on pyridoxal 5'-phosphate as a cofactor.

The catalysed reaction is L-arginine + H(+) = agmatine + CO2. Catalyzes the biosynthesis of agmatine from arginine. In Pasteurella multocida (strain Pm70), this protein is Biosynthetic arginine decarboxylase.